Here is a 358-residue protein sequence, read N- to C-terminus: MTKAYSTRVLTFLILISLMAVTLNLFPTVEAKKRSRDAPIVKGLSWNFYQKACPKVENIIRKELKKVFKRDIGLAAAILRIHFHDCFVQGCEASVLLAGSASGPGEQSSIPNLTLRQQAFVVINNLRALVQKKCGQVVSCSDILALAARDSVVLSGGPDYAVPLGRRDSLAFASQETTLNNLPPPFFNASQLIADFANRNLNITDLVALSGGHTIGIAHCPSFTDRLYPNQDPTMNQFFANSLKRTCPTANSSNTQVNDIRSPDVFDNKYYVDLMNRQGLFTSDQDLFVDKRTRGIVESFAIDQQLFFDYFTVAMIKMGQMSVLTGTQGEIRSNCSARNTQSFMSVLEEGIEEAISMI.

Residues 1–31 (MTKAYSTRVLTFLILISLMAVTLNLFPTVEA) form the signal peptide. 4 disulfide bridges follow: cysteine 53-cysteine 134, cysteine 86-cysteine 91, cysteine 140-cysteine 335, and cysteine 220-cysteine 247. Histidine 84 serves as the catalytic Proton acceptor. Residues aspartate 85, valine 88, glycine 90, glutamate 92, and serine 94 each contribute to the Ca(2+) site. A substrate-binding site is contributed by proline 183. Residues asparagine 188 and asparagine 202 are each glycosylated (N-linked (GlcNAc...) asparagine). A heme b-binding site is contributed by histidine 213. Ca(2+) is bound at residue threonine 214. Asparagine 251 carries an N-linked (GlcNAc...) asparagine glycan. Ca(2+) is bound by residues aspartate 259, serine 262, and aspartate 267. A glycan (N-linked (GlcNAc...) asparagine) is linked at asparagine 334.

It belongs to the peroxidase family. Classical plant (class III) peroxidase subfamily. Requires heme b as cofactor. The cofactor is Ca(2+). Expressed in roots and leaves.

The protein resides in the secreted. It localises to the vacuole. The catalysed reaction is 2 a phenolic donor + H2O2 = 2 a phenolic radical donor + 2 H2O. In terms of biological role, removal of H(2)O(2), oxidation of toxic reductants, biosynthesis and degradation of lignin, suberization, auxin catabolism, response to environmental stresses such as wounding, pathogen attack and oxidative stress. These functions might be dependent on each isozyme/isoform in each plant tissue. Functionally, exhibits a Ca(2+)-pectate binding affinity which could be interpreted in vivo as a specificity to interact with the pectic structure of the cell wall. The protein is Peroxidase 12 (PER12) of Arabidopsis thaliana (Mouse-ear cress).